The primary structure comprises 473 residues: High-affinity proline transporter PutP (473 aa).

The next 12 helical transmembrane spans lie at 32 to 52 (LSAGAADMSGWLLMGLPGAMF), 56 to 76 (LSGAWIVIGLCLGAWANWLYV), 114 to 134 (IVILVFFTFYVSSGMVSGGVL), 146 to 166 (GLWIVTGVVVAYTLFGGFLAV), 171 to 191 (FVQGIIMFAALILVPIVTFFH), 218 to 238 (VLGIISLFAWGLGYFGQPHII), 256 to 276 (IGMGWMILSAVGAVLTGLGGI), 299 to 319 (ILFHPIITGFLISAILAAIMS), 350 to 370 (LVFLGRLAVLAVSIVALVLAW), 376 to 396 (ILGLVSYAWAGFGASFGPVVL), 408 to 428 (GALAGMIVGAATVIIWANAGL), and 431 to 451 (FLYEMIPGFAASLLSVFFVSI).

The protein belongs to the sodium:solute symporter (SSF) (TC 2.A.21) family.

It is found in the cell membrane. The enzyme catalyses L-proline(in) + Na(+)(in) = L-proline(out) + Na(+)(out). Functionally, catalyzes the high-affinity uptake of extracellular proline. Important for the use of proline as a sole carbon and energy source or a sole nitrogen source. This is High-affinity proline transporter PutP from Bacillus subtilis (strain 168).